Reading from the N-terminus, the 548-residue chain is MAKFMTPVIQDNPSGWGPCAVPEQFRDMPYQPFSKGDRLGKVADWTGATYQDKRYTNKYSSQFGGGSQYAYFHEEDETSFQLVDTARTQKTAYQRNRMRFAQRNLRRDKDRRNMVQFNLQTLPKSAKQKERERIRLQKKFQKQFGVRQKWDQKSQKPRDSSVEVRSDWEVKEEMDFPQLMKMRYLEVSEPQDIECCGALEYYDKAFDRITTRSEKPLRSIKRIFHTVTTTDDPVIRKLAKTQGNVFATDAILATLMSCTRSVYSWDIVVQRVGSKLFFDKRDNSDFDLLTVSETANEPPQDEGNSFNSPRNLAMEATYINHNFSQQCLRMGRERYNFPNPNPFVEDDMDKNEIASVAYRYRRWKLGDDIDLIVRCEHDGVMTGANGEVSFINIKTLNEWDSRHCNGVDWRQKLDSQRGAVIATELKNNSYKLARWTCCALLAGSEYLKLGYVSRYHVKDSSRHVILGTQQFKPNEFASQINLSVENAWGILRCVIDICMKLEEGKYLILKDPNKQVIRVYSLPDGTFSSEEDEEDEEEEEEEEEEEET.

At lysine 53 the chain carries N6-acetyllysine. The residue at position 161 (serine 161) is a Phosphoserine. The tract at residues 285 to 299 (DFDLLTVSETANEPP) is RNA gate. Residues 523 to 548 (PDGTFSSEEDEEDEEEEEEEEEEEET) form a disordered region. Phosphoserine is present on residues serine 528 and serine 529. The span at 529 to 548 (SEEDEEDEEEEEEEEEEEET) shows a compositional bias: acidic residues.

The protein belongs to the eIF-3 subunit D family. As to quaternary structure, component of the eukaryotic translation initiation factor 3 (eIF-3) complex, which is composed of 13 subunits: EIF3A, EIF3B, EIF3C, EIF3D, EIF3E, EIF3F, EIF3G, EIF3H, EIF3I, EIF3J, EIF3K, EIF3L and EIF3M. The eIF-3 complex appears to include 3 stable modules: module A is composed of EIF3A, EIF3B, EIF3G and EIF3I; module B is composed of EIF3F, EIF3H, and EIF3M; and module C is composed of EIF3C, EIF3D, EIF3E, EIF3K and EIF3L. EIF3C of module C binds EIF3B of module A and EIF3H of module B, thereby linking the three modules. EIF3J is a labile subunit that binds to the eIF-3 complex via EIF3B. The eIF-3 complex may interact with RPS6KB1 under conditions of nutrient depletion. Mitogenic stimulation may lead to binding and activation of a complex composed of MTOR and RPTOR, leading to phosphorylation and release of RPS6KB1 and binding of EIF4B to eIF-3.

Its subcellular location is the cytoplasm. Its function is as follows. mRNA cap-binding component of the eukaryotic translation initiation factor 3 (eIF-3) complex, a complex required for several steps in the initiation of protein synthesis of a specialized repertoire of mRNAs. The eIF-3 complex associates with the 40S ribosome and facilitates the recruitment of eIF-1, eIF-1A, eIF-2:GTP:methionyl-tRNAi and eIF-5 to form the 43S pre-initiation complex (43S PIC). The eIF-3 complex stimulates mRNA recruitment to the 43S PIC and scanning of the mRNA for AUG recognition. The eIF-3 complex is also required for disassembly and recycling of post-termination ribosomal complexes and subsequently prevents premature joining of the 40S and 60S ribosomal subunits prior to initiation. The eIF-3 complex specifically targets and initiates translation of a subset of mRNAs involved in cell proliferation, including cell cycling, differentiation and apoptosis, and uses different modes of RNA stem-loop binding to exert either translational activation or repression. In the eIF-3 complex, EIF3D specifically recognizes and binds the 7-methylguanosine cap of a subset of mRNAs. In Mus musculus (Mouse), this protein is Eukaryotic translation initiation factor 3 subunit D (Eif3d).